Reading from the N-terminus, the 634-residue chain is Pescadillo homolog (634 aa).

Residues 321–414 enclose the BRCT domain; sequence RLRTLFKGLK…QLLPTNKYFM (94 aa). Disordered regions lie at residues 437 to 473, 491 to 561, and 603 to 634; these read EEKA…EEIE, EYKK…RKAE, and NIDA…LKMA. At Ser453 the chain carries Phosphoserine. Composition is skewed to acidic residues over residues 454–473 and 501–527; these read DDDD…EEIE and VNED…DVEQ. Coiled coils occupy residues 460 to 546 and 596 to 629; these read SDAE…KVES and LLRK…AAAK. 2 stretches are compositionally biased toward basic and acidic residues: residues 528 to 548 and 603 to 623; these read LDDK…ESGK and NIDA…KKAA. Over residues 624-634 the composition is skewed to low complexity; the sequence is AEAAAKALKMA.

Belongs to the pescadillo family.

The protein resides in the nucleus. It is found in the nucleolus. Its subcellular location is the nucleoplasm. Functionally, required for maturation of ribosomal RNAs and formation of the large ribosomal subunit. The sequence is that of Pescadillo homolog from Drosophila willistoni (Fruit fly).